The chain runs to 288 residues: Ribosomal RNA small subunit methyltransferase I (288 aa).

Belongs to the methyltransferase superfamily. RsmI family.

It is found in the cytoplasm. The enzyme catalyses cytidine(1402) in 16S rRNA + S-adenosyl-L-methionine = 2'-O-methylcytidine(1402) in 16S rRNA + S-adenosyl-L-homocysteine + H(+). Its function is as follows. Catalyzes the 2'-O-methylation of the ribose of cytidine 1402 (C1402) in 16S rRNA. The chain is Ribosomal RNA small subunit methyltransferase I from Vibrio cholerae serotype O1 (strain ATCC 39315 / El Tor Inaba N16961).